Reading from the N-terminus, the 399-residue chain is Alpha-ketoglutarate-dependent dioxygenase fc-dox (399 aa).

Residues His-158 and Asp-160 each contribute to the Fe cation site. 2-oxoglutarate is bound at residue Thr-203. His-355 is a Fe cation binding site. Arg-367 is a 2-oxoglutarate binding site. The interval 371–399 is disordered; that stretch reads QGWLAGDRPPKGPVPIPDPRARSSIYYQK.

The protein belongs to the TfdA dioxygenase family. Fe(2+) serves as cofactor.

It participates in mycotoxin biosynthesis. Its function is as follows. Alpha-ketoglutarate-dependent dioxygenase; part of the 2 gene clusters that mediate the biosynthesis of fusicoccins, diterpene glucosides that display phytohormone-like activity and function as potent activators of plasma membrane H(+)-ATPases in plants by modifying 14-3-3 proteins and cause the plant disease constriction canker. The first step in the pathway is performed by the fusicoccadiene synthase PaFS that possesses both prenyl transferase and terpene cyclase activity, converting isopentenyl diphosphate and dimethylallyl diphosphate into geranylgeranyl diphosphate (GGDP) and successively converting GGDP into fusicocca-2,10(14)-diene, a precursor for fusicoccin H. The second step is the oxidation at the C-8 position by the cytochrome P450 monooxygenase PaP450-2 to yield fusicocca-2,10(14)-diene-8-beta-ol. The cytochrome P450 monooxygenase PaP450-1 then catalyzes the hydroxylation at the C-16 position to produce fusicocca-2,10(14)-diene-8-beta,16-diol. The dioxygenase fc-dox then catalyzes the 16-oxydation of fusicocca-2,10(14)-diene-8-beta,16-diol to yield an aldehyde (8-beta-hydroxyfusicocca-1,10(14)-dien-16-al). The short-chain dehydrogenase/reductase fc-sdr catalyzes the reduction of the aldehyde to yield fusicocca-1,10(14)-diene-8-beta,16-diol. The next step is the hydroxylation at C-9 performed by the cytochrome P450 monooxygenase PaP450-3 that leads to fusicoccin H aglycon which is glycosylated to fusicoccin H by the O-glycosyltransferase PaGT. Hydroxylation at C-12 by the cytochrome P450 monooxygenase PaP450-4 leads then to the production of fusicoccin Q and is followed by methylation by the O-methyltransferase PaMT to yield fusicoccin P. Fusicoccin P is further converted to fusicoccin J via prenylation by the O-glucose prenyltransferase PaPT. Cytochrome P450 monooxygenase PaP450-5 then performs hydroxylation at C-19 to yield dideacetyl-fusicoccin A which is acetylated to 3'-O-deacetyl-fusicoccin A by the O-acetyltransferase PaAT-2. Finally, a another acetylation by the O-acetyltransferase PaAT-1 yields fusicoccin A. This chain is Alpha-ketoglutarate-dependent dioxygenase fc-dox, found in Phomopsis amygdali (Fusicoccum amygdali).